A 201-amino-acid polypeptide reads, in one-letter code: Recombination protein RecR (201 aa).

Residues 59–74 form a C4-type zinc finger; the sequence is CEICGNMDTENICRIC. One can recognise a Toprim domain in the interval 82–177; the sequence is SIIAIVETVA…KISRLASGIP (96 aa).

This sequence belongs to the RecR family.

Functionally, may play a role in DNA repair. It seems to be involved in an RecBC-independent recombinational process of DNA repair. It may act with RecF and RecO. This is Recombination protein RecR from Rickettsia rickettsii (strain Iowa).